We begin with the raw amino-acid sequence, 61 residues long: Small ribosomal subunit protein uS14 (61 aa).

4 residues coordinate Zn(2+): C24, C27, C40, and C43.

Belongs to the universal ribosomal protein uS14 family. Zinc-binding uS14 subfamily. As to quaternary structure, part of the 30S ribosomal subunit. Contacts proteins S3 and S10. Requires Zn(2+) as cofactor.

Its function is as follows. Binds 16S rRNA, required for the assembly of 30S particles and may also be responsible for determining the conformation of the 16S rRNA at the A site. The polypeptide is Small ribosomal subunit protein uS14 (Borreliella afzelii (strain PKo) (Borrelia afzelii)).